The chain runs to 484 residues: tRNA sulfurtransferase (484 aa).

The THUMP domain maps to 56–158 (NCLKKALSKV…GNRAYFYTEV (103 aa)). Residues 176-177 (LV), K257, G279, and Q288 each bind ATP. A disulfide bridge links C336 with C444. One can recognise a Rhodanese domain in the interval 396–479 (APEGAVIVDL…TRNAVPPSSQ (84 aa)). The Cysteine persulfide intermediate role is filled by C444.

This sequence belongs to the ThiI family.

The protein resides in the cytoplasm. It carries out the reaction [ThiI sulfur-carrier protein]-S-sulfanyl-L-cysteine + a uridine in tRNA + 2 reduced [2Fe-2S]-[ferredoxin] + ATP + H(+) = [ThiI sulfur-carrier protein]-L-cysteine + a 4-thiouridine in tRNA + 2 oxidized [2Fe-2S]-[ferredoxin] + AMP + diphosphate. It catalyses the reaction [ThiS sulfur-carrier protein]-C-terminal Gly-Gly-AMP + S-sulfanyl-L-cysteinyl-[cysteine desulfurase] + AH2 = [ThiS sulfur-carrier protein]-C-terminal-Gly-aminoethanethioate + L-cysteinyl-[cysteine desulfurase] + A + AMP + 2 H(+). Its pathway is cofactor biosynthesis; thiamine diphosphate biosynthesis. Catalyzes the ATP-dependent transfer of a sulfur to tRNA to produce 4-thiouridine in position 8 of tRNAs, which functions as a near-UV photosensor. Also catalyzes the transfer of sulfur to the sulfur carrier protein ThiS, forming ThiS-thiocarboxylate. This is a step in the synthesis of thiazole, in the thiamine biosynthesis pathway. The sulfur is donated as persulfide by IscS. This is tRNA sulfurtransferase from Pyrobaculum aerophilum (strain ATCC 51768 / DSM 7523 / JCM 9630 / CIP 104966 / NBRC 100827 / IM2).